Reading from the N-terminus, the 351-residue chain is Porphobilinogen deaminase (351 aa).

Cys242 is subject to S-(dipyrrolylmethanemethyl)cysteine.

Belongs to the HMBS family. As to quaternary structure, monomer. Dipyrromethane serves as cofactor.

The catalysed reaction is 4 porphobilinogen + H2O = hydroxymethylbilane + 4 NH4(+). Its pathway is porphyrin-containing compound metabolism; protoporphyrin-IX biosynthesis; coproporphyrinogen-III from 5-aminolevulinate: step 2/4. In terms of biological role, tetrapolymerization of the monopyrrole PBG into the hydroxymethylbilane pre-uroporphyrinogen in several discrete steps. The chain is Porphobilinogen deaminase from Rickettsia peacockii (strain Rustic).